Reading from the N-terminus, the 347-residue chain is MTNAVQTHMPAARAKPKKAIQGEKLRGYDKVARIPIKIIPTVEAKKKPDWIRVKLSSPAEVARIKSTLREQKLYTVCEEAACPNLPQCFADGTATFMIMGDICTRRCPFCDVGHGRPNELDKDEPRHTAETIQGLGLKYAVITSVDRDDLKDGGAAHFVEVLNESRALSPNCLIEILVPDFRGRMDIALDLLTETAPDVFNHNIETVPRLYKAFRPGSDYQHSLDLLKIYKERRPDIATKCGFMVGLGETEEEIYKLLDDLKAHNVDMITVGQYLQPSKDHAPVDRYVHPDEFQRYMDYGKKIGFFNIWAGPMVRSSYFADRQYYGEDCPAPIRSKKALAAEGKLGC.

Positions 77, 82, 88, 103, 107, 110, and 317 each coordinate [4Fe-4S] cluster. The region spanning 89 to 306 is the Radical SAM core domain; sequence FADGTATFMI…MDYGKKIGFF (218 aa).

This sequence belongs to the radical SAM superfamily. Lipoyl synthase family. Requires [4Fe-4S] cluster as cofactor.

Its subcellular location is the cytoplasm. The enzyme catalyses [[Fe-S] cluster scaffold protein carrying a second [4Fe-4S](2+) cluster] + N(6)-octanoyl-L-lysyl-[protein] + 2 oxidized [2Fe-2S]-[ferredoxin] + 2 S-adenosyl-L-methionine + 4 H(+) = [[Fe-S] cluster scaffold protein] + N(6)-[(R)-dihydrolipoyl]-L-lysyl-[protein] + 4 Fe(3+) + 2 hydrogen sulfide + 2 5'-deoxyadenosine + 2 L-methionine + 2 reduced [2Fe-2S]-[ferredoxin]. The protein operates within protein modification; protein lipoylation via endogenous pathway; protein N(6)-(lipoyl)lysine from octanoyl-[acyl-carrier-protein]: step 2/2. In terms of biological role, catalyzes the radical-mediated insertion of two sulfur atoms into the C-6 and C-8 positions of the octanoyl moiety bound to the lipoyl domains of lipoate-dependent enzymes, thereby converting the octanoylated domains into lipoylated derivatives. The chain is Lipoyl synthase from Psychrobacter arcticus (strain DSM 17307 / VKM B-2377 / 273-4).